Consider the following 62-residue polypeptide: Sperm protamine P1 (62 aa).

Positions 1–62 (MARYRHSRSR…RYSRRRRRRY (62 aa)) are disordered.

This sequence belongs to the protamine P1 family. Testis.

The protein resides in the nucleus. Its subcellular location is the chromosome. In terms of biological role, protamines substitute for histones in the chromatin of sperm during the haploid phase of spermatogenesis. They compact sperm DNA into a highly condensed, stable and inactive complex. This is Sperm protamine P1 (PRM1) from Dorcopsulus vanheurni (Lesser forest wallaby).